Here is a 1170-residue protein sequence, read N- to C-terminus: RNA-binding protein 33 (1170 aa).

2 disordered regions span residues 1-152 and 199-221; these read MAAA…EGHE and KDIK…LRFK. An N-acetylalanine modification is found at Ala-2. Basic and acidic residues predominate over residues 20-36; that stretch reads QFDKPGAERSWRRRAAD. The span at 37–49 shows a compositional bias: acidic residues; that stretch reads EDWDSELEDDLLG. Ser-41 carries the phosphoserine modification. The span at 82-108 shows a compositional bias: polar residues; it reads FSSQGVTISLNATSGMVTSFELSDNTN. Acidic residues-rich tracts occupy residues 112 to 126 and 203 to 214; these read GEQE…GEDE and EESDEEEEDDEE. Ser-205 and Ser-233 each carry phosphoserine. 4 disordered regions span residues 259-708, 721-784, 833-863, and 942-1050; these read FEER…NSNL, MSSS…PDED, QLYA…PFPG, and AVPQ…VPPG. The segment covering 267–278 has biased composition (basic residues); it reads KQGRYSSRRGGR. Residues 289 to 306 show a composition bias toward basic and acidic residues; the sequence is GDQRRESTERGRMKDHRP. Residues 311–329 are compositionally biased toward pro residues; that stretch reads TQPPVVPQAPPPPPPPPQQ. Composition is skewed to low complexity over residues 335 to 348, 357 to 372, and 394 to 403; these read LFQP…LPVQ, QGMH…RMMM, and TVVTPVQVPL. Residues 419–433 show a composition bias toward pro residues; the sequence is FPGPPEFPQHTPGPV. Arg-470 bears the Asymmetric dimethylarginine mark. 3 stretches are compositionally biased toward pro residues: residues 481–490, 554–568, and 582–630; these read SPPPPPPPPT, FIPP…PGQP, and LHPP…PQHP. Residues 632-642 are compositionally biased toward basic residues; that stretch reads QHQHHHHHHHL. Polar residues-rich tracts occupy residues 662–708 and 721–732; these read QTAQ…NSNL and MSSSRCSATPSA. A phosphoserine mark is found at Ser-741 and Ser-765. The stretch at 789 to 835 forms a coiled coil; that stretch reads LYRLKIEEQKRLREEILKQKELRRQQQAGARKKELLERLAQQQQQLY. Ser-951 bears the Phosphoserine mark. A Glycyl lysine isopeptide (Lys-Gly) (interchain with G-Cter in SUMO2) cross-link involves residue Lys-960. Ser-973 and Ser-991 each carry phosphoserine. Asymmetric dimethylarginine; alternate is present on Arg-1028. Arg-1028 bears the Omega-N-methylarginine; alternate mark. An RRM domain is found at 1098–1170; the sequence is CVVSVEGLSS…SHINVALIVE (73 aa).

In terms of assembly, associates with the NXF1-NXT1 RNA export complex. Interacts with ALKBH5; facilitating ALKBH5 recruitment to m6A-containing transcripts. Interacts with SENP1; promoting ALKBH5 deSUMOylation and subsequent activation.

The protein resides in the nucleus. It is found in the cytoplasm. Its function is as follows. RNA reader protein, which recognizes and binds specific RNAs, thereby regulating RNA metabolic processes, such as mRNA export, mRNA stability and/or translation. Binds a subset of intronless RNAs containing GC-rich elements, such as NORAD, and promotes their nuclear export by recruiting target RNAs to components of the NXF1-NXT1 RNA export machinery. Specifically recognizes and binds N6-methyladenosine (m6A)-containing mRNAs, promoting their demethylation by ALKBH5. Acts as an molecular adapter, which (1) promotes ALKBH5 recruitment to m6A-containing transcripts and (2) activates ALKBH5 demethylase activity by recruiting SENP1, leading to ALKBH5 deSUMOylation and subsequent activation. The sequence is that of RNA-binding protein 33 from Homo sapiens (Human).